The sequence spans 286 residues: uncharacterized protein (286 aa).

H183 serves as the catalytic Proton donor. The active-site Nucleophile is the C277.

The protein belongs to the DDAH family.

This is an uncharacterized protein from Bacillus subtilis (strain 168).